The chain runs to 116 residues: Large ribosomal subunit protein uL18 (116 aa).

Belongs to the universal ribosomal protein uL18 family. Part of the 50S ribosomal subunit; part of the 5S rRNA/L5/L18/L25 subcomplex. Contacts the 5S and 23S rRNAs.

This is one of the proteins that bind and probably mediate the attachment of the 5S RNA into the large ribosomal subunit, where it forms part of the central protuberance. This chain is Large ribosomal subunit protein uL18, found in Shewanella amazonensis (strain ATCC BAA-1098 / SB2B).